The chain runs to 143 residues: MAKKIIGYIKLQIPAGKANPSPPVGPALGQRQLNIMEFCKAFNAATQKMEPGLPVPVVITAYADKSFTFVLKTTPASVLIKKLAGLSKGSAQPHVDKVGKLTRSQVEEIAKIKMEDLTAADMDAAIRTIAGSARSMGVEVEGV.

This sequence belongs to the universal ribosomal protein uL11 family. As to quaternary structure, part of the ribosomal stalk of the 50S ribosomal subunit. Interacts with L10 and the large rRNA to form the base of the stalk. L10 forms an elongated spine to which L12 dimers bind in a sequential fashion forming a multimeric L10(L12)X complex. Post-translationally, one or more lysine residues are methylated.

Functionally, forms part of the ribosomal stalk which helps the ribosome interact with GTP-bound translation factors. The polypeptide is Large ribosomal subunit protein uL11 (Nitrosomonas eutropha (strain DSM 101675 / C91 / Nm57)).